Reading from the N-terminus, the 503-residue chain is uncharacterized protein (503 aa).

A run of 12 helical transmembrane segments spans residues 20 to 40, 43 to 63, 106 to 126, 138 to 158, 166 to 186, 215 to 235, 249 to 269, 301 to 321, 359 to 379, 405 to 425, 443 to 463, and 468 to 488; these read FIAF…VLTM, LGPF…GVML, VSLT…LSFA, LIGL…ISLF, AILF…ILGI, VIST…LTAI, LLMF…ISGI, YLGI…SLAS, VWAS…VPFL, LAVL…FMIL, GVSF…ITAW, and TFKL…FIHS.

This sequence to M.genitalium MG225.

The protein resides in the cell membrane. This is an uncharacterized protein from Mycoplasma pneumoniae (strain ATCC 29342 / M129 / Subtype 1) (Mycoplasmoides pneumoniae).